We begin with the raw amino-acid sequence, 179 residues long: ATP synthase subunit delta 2 (179 aa).

This sequence belongs to the ATPase delta chain family. In terms of assembly, F-type ATPases have 2 components, F(1) - the catalytic core - and F(0) - the membrane proton channel. F(1) has five subunits: alpha(3), beta(3), gamma(1), delta(1), epsilon(1). F(0) has three main subunits: a(1), b(2) and c(10-14). The alpha and beta chains form an alternating ring which encloses part of the gamma chain. F(1) is attached to F(0) by a central stalk formed by the gamma and epsilon chains, while a peripheral stalk is formed by the delta and b chains.

It localises to the cell inner membrane. In terms of biological role, f(1)F(0) ATP synthase produces ATP from ADP in the presence of a proton or sodium gradient. F-type ATPases consist of two structural domains, F(1) containing the extramembraneous catalytic core and F(0) containing the membrane proton channel, linked together by a central stalk and a peripheral stalk. During catalysis, ATP synthesis in the catalytic domain of F(1) is coupled via a rotary mechanism of the central stalk subunits to proton translocation. Its function is as follows. This protein is part of the stalk that links CF(0) to CF(1). It either transmits conformational changes from CF(0) to CF(1) or is implicated in proton conduction. The protein is ATP synthase subunit delta 2 of Syntrophotalea carbinolica (strain DSM 2380 / NBRC 103641 / GraBd1) (Pelobacter carbinolicus).